A 275-amino-acid polypeptide reads, in one-letter code: ORF2/4 protein (275 aa).

Disordered stretches follow at residues 44–103 and 116–207; these read LGRP…DGEL and ADPQ…PPPT. The segment covering 79–98 has biased composition (gly residues); it reads GTGGDAAGGEAGGSRGAGDG. Residues 129-139 show a composition bias toward basic residues; the sequence is GQRKNARKRLR. A compositionally biased stretch (low complexity) spans 170–188; that stretch reads TRTTSPAAPAAATPQSPAR.

In Torque teno virus (isolate Human/Finland/Hel32/2002) (TTV), this protein is ORF2/4 protein.